The chain runs to 311 residues: Putative HTH-type transcriptional regulatory protein MTH_967 (311 aa).

Residues 134–192 (LREVREEYNLSLKDLADLAHVSRKTIYKYENGLARASAETAMILEEILNIRITLSIDIF) form the HTH cro/C1-type domain. Residues 145-164 (LKDLADLAHVSRKTIYKYEN) constitute a DNA-binding region (H-T-H motif).

This Methanothermobacter thermautotrophicus (strain ATCC 29096 / DSM 1053 / JCM 10044 / NBRC 100330 / Delta H) (Methanobacterium thermoautotrophicum) protein is Putative HTH-type transcriptional regulatory protein MTH_967.